The chain runs to 312 residues: MEDNKHWIEKLFPPHFTVQDFFSQSFEPEQLISEKISKEKVKNVEKMYHNAAERCLEAGKWKRKEELSNIFSYDPNIPDDQKEKEPPVGNLHDNVTCPIAAHVDDQCIWRENELKVLRHEMQQRYSEGAKFKNQLDACKLELSELKAKDKNTEQELGKAKEALTLSKTHIRNKGILVKQLQKDKLQKDSEIQSLKKDLHEKSVMINSLNKNLCIAGEEIQELKLKSKDLEQELITVKQQQGVKEGTLIENLKRNYILEKNKLLREIENLKEEERKREKTHSLNLAALDLLRKHFSSQSINTSTEVIQLKIVH.

Residues 126 to 281 are a coiled coil; that stretch reads SEGAKFKNQL…EERKREKTHS (156 aa).

It belongs to the CCDC160 family.

The chain is Coiled-coil domain-containing protein 160 homolog from Xenopus tropicalis (Western clawed frog).